Consider the following 175-residue polypeptide: Pituitary adenylate cyclase-activating polypeptide (175 aa).

Residues 1–24 form the signal peptide; that stretch reads MTMCSGARLALLVYGIIMHSSVSC. Residues 25–78 constitute a propeptide that is removed on maturation; sequence SPAAGLSFPGIRPEDEAYDQDGNPLQDFYDWDPPGVGSPASALRDAYALYYPAD. The segment at 149 to 157 is important for receptor binding; the sequence is VKKYLAAVL. Residue L157 is modified to Leucine amide. K168 is modified (lysine amide). Residues 172-175 constitute a propeptide that is removed on maturation; the sequence is IAYL.

This sequence belongs to the glucagon family.

It localises to the secreted. In terms of biological role, PACAP is a neuropeptide involved in diverse array of physiological processes through activating the PACAP subfamily of class B1 G protein-coupled receptors: VIP receptor 1 (VIPR1), VIP receptor 2 (VIPR2), and PACAP type I receptor (ADCYAP1R1). Exerts neuroprotective and general cytoprotective effects due to anti-apoptotic, anti-inflammatory, and antioxidant actions. Promotes neuron projection development through the RAPGEF2/Rap1/B-Raf/ERK pathway. In chromaffin cells, induces long-lasting increase of intracellular calcium concentrations and neuroendocrine secretion. Involved in the control of glucose homeostasis, induces insulin secretion by pancreatic beta cells. PACAP exists in two bioactive forms from proteolysis of the same precursor protein, PACAP27 and PACAP38, which differ by eleven amino acid residues in the C-terminus. The protein is Pituitary adenylate cyclase-activating polypeptide of Mus musculus (Mouse).